The primary structure comprises 372 residues: NAD(P)H-quinone oxidoreductase subunit 1 (372 aa).

Transmembrane regions (helical) follow at residues 27 to 47, 97 to 117, 128 to 148, 166 to 186, 204 to 224, 249 to 269, 308 to 328, and 351 to 371; these read AIWM…GVLV, WLFT…FLIV, VGMG…GLLM, AAQS…IAMM, ILGW…IAAL, YSGM…ILSS, SLGI…AILL, and VGLV…FAFG.

This sequence belongs to the complex I subunit 1 family. As to quaternary structure, NDH-1 is composed of at least 11 different subunits.

The protein localises to the cellular thylakoid membrane. It catalyses the reaction a plastoquinone + NADH + (n+1) H(+)(in) = a plastoquinol + NAD(+) + n H(+)(out). The catalysed reaction is a plastoquinone + NADPH + (n+1) H(+)(in) = a plastoquinol + NADP(+) + n H(+)(out). Functionally, NDH-1 shuttles electrons from an unknown electron donor, via FMN and iron-sulfur (Fe-S) centers, to quinones in the respiratory and/or the photosynthetic chain. The immediate electron acceptor for the enzyme in this species is believed to be plastoquinone. Couples the redox reaction to proton translocation, and thus conserves the redox energy in a proton gradient. The chain is NAD(P)H-quinone oxidoreductase subunit 1 from Nostoc punctiforme (strain ATCC 29133 / PCC 73102).